The sequence spans 283 residues: Zinc-finger homeodomain protein 8 (283 aa).

A ZF-HD dimerization-type; degenerate zinc finger spans residues 23–68 (YKECMRNHAAAMGGQAFDGCGEYMPASPDSLKCAACGCHRSFHRRA). 2 disordered regions span residues 131–171 (AGRA…TKFT) and 244–283 (GLGTGLGTGISGDGDGDDDDTDDSPPRAAVSSPSPSPISV). A compositionally biased stretch (gly residues) spans 148 to 161 (GSAGGSGSGGGGIF). The segment at residues 163–226 (RKRFRTKFTP…NHKNQLASSP (64 aa)) is a DNA-binding region (homeobox). The segment covering 244–256 (GLGTGLGTGISGD) has biased composition (gly residues). A compositionally biased stretch (acidic residues) spans 257 to 266 (GDGDDDDTDD). Over residues 269–283 (PRAAVSSPSPSPISV) the composition is skewed to low complexity.

Homo- and heterodimer with other ZFHD proteins.

It localises to the nucleus. Functionally, putative transcription factor. The chain is Zinc-finger homeodomain protein 8 (ZHD8) from Oryza sativa subsp. japonica (Rice).